The primary structure comprises 313 residues: PDCD10 and GCKIII kinases-associated protein 1 (313 aa).

The interval 40–89 is disordered; the sequence is RLKGTQNSEVEVPRNALHDGSLSNSESRGSTTGLPHQGPLPQEDSEERPC. 2 positions are modified to phosphoserine: S60 and S64. A compositionally biased stretch (polar residues) spans 60–73; that stretch reads SLSNSESRGSTTGL. T104 carries the phosphothreonine modification. 3 positions are modified to phosphoserine: S107, S237, and S240. Residues 253–286 are disordered; it reads YFKEEGPTHPTPAADSGSEREDPHTYNGDREGVV. Positions 269–285 are enriched in basic and acidic residues; the sequence is GSEREDPHTYNGDREGV.

In terms of assembly, interacts with KEAP1; this interaction prevents the ubiquitination of KEAP1 by TRIM25, thus protecting KEAP1 from degradation. Found in association with PDCD10 and members of the STE20 kinases, such as STK24, STK25 and STK26.

The protein localises to the cell membrane. Acts as a tumor suppressor. Acts as a tumor suppressor for colorectal cancer cell proliferation by targeting KEAP1/USP17/ELK1/CDK6 axis. The chain is PDCD10 and GCKIII kinases-associated protein 1 from Mus musculus (Mouse).